We begin with the raw amino-acid sequence, 84 residues long: U4-theraphotoxin-Hhn1a (84 aa).

A signal peptide spans 1-22; sequence MKVTLIAILTCAAVLVLHTTAA. A propeptide spanning residues 23–47 is cleaved from the precursor; sequence EELEESQLMEVGMPDTELEAVDEER. Disulfide bonds link Cys-51/Cys-65, Cys-55/Cys-76, and Cys-70/Cys-81.

Belongs to the neurotoxin 12 (Hwtx-2) family. 02 (Hwtx-2) subfamily. As to expression, expressed by the venom gland.

It is found in the secreted. In terms of biological role, postsynaptic neurotoxin. The polypeptide is U4-theraphotoxin-Hhn1a (Cyriopagopus hainanus (Chinese bird spider)).